Here is a 69-residue protein sequence, read N- to C-terminus: DNA-directed RNA polymerase subunit epsilon (69 aa).

Belongs to the RNA polymerase subunit epsilon family. RNAP is composed of a core of 2 alpha, a beta and a beta' subunit. The core is associated with a delta subunit, and at least one of epsilon or omega. When a sigma factor is associated with the core the holoenzyme is formed, which can initiate transcription.

It carries out the reaction RNA(n) + a ribonucleoside 5'-triphosphate = RNA(n+1) + diphosphate. In terms of biological role, a non-essential component of RNA polymerase (RNAP). The sequence is that of DNA-directed RNA polymerase subunit epsilon from Halalkalibacterium halodurans (strain ATCC BAA-125 / DSM 18197 / FERM 7344 / JCM 9153 / C-125) (Bacillus halodurans).